A 676-amino-acid polypeptide reads, in one-letter code: Serine/threonine-protein kinase Haspin homolog ALK2 (676 aa).

Residues 53–93 (HKGSAEDESQSFFTSSDSPTSKTRPVGKTIENDDYYGKRSS) form a disordered region. The span at 62–75 (QSFFTSSDSPTSKT) shows a compositional bias: polar residues. The KEN box motif lies at 116–118 (KEN). A D box motif is present at residues 150-158 (RTPLRPISN). The tract at residues 228-312 (SSRSVNDQDP…HKTSHSSLNK (85 aa)) is disordered. A compositionally biased stretch (polar residues) spans 232 to 259 (VNDQDPNFVQPKPTNSLQKKSSISSFHN). Residues 383–672 (LCDVKYILHD…TCGDLLSLKG (290 aa)) enclose the Protein kinase domain. ATP-binding positions include 389–397 (ILHDLREAQ) and lysine 430.

It belongs to the protein kinase superfamily. Ser/Thr protein kinase family. Haspin subfamily. Periodically phosphorylated during the cell cycle with a phosphorylation peak during mitosis and hyperphosphorylated after DNA damage.

It catalyses the reaction L-seryl-[protein] + ATP = O-phospho-L-seryl-[protein] + ADP + H(+). It carries out the reaction L-threonyl-[protein] + ATP = O-phospho-L-threonyl-[protein] + ADP + H(+). Functionally, serine/threonine haspin-like protein kinase involved in cell cycle regulation. This is Serine/threonine-protein kinase Haspin homolog ALK2 (ALK2) from Saccharomyces cerevisiae (strain ATCC 204508 / S288c) (Baker's yeast).